Reading from the N-terminus, the 385-residue chain is GDP-D-glucose phosphorylase 1 (385 aa).

The active-site Tele-GMP-histidine intermediate is the His218.

Belongs to the GDPGP1 family.

It is found in the cytoplasm. It catalyses the reaction GDP-alpha-D-glucose + phosphate = alpha-D-glucose 1-phosphate + GDP + H(+). Functionally, specific and highly efficient GDP-D-glucose phosphorylase regulating the levels of GDP-D-glucose in cells. The protein is GDP-D-glucose phosphorylase 1 (GDPGP1) of Homo sapiens (Human).